The following is a 732-amino-acid chain: Cyclopenase asqI (732 aa).

His-168, His-172, and His-200 together coordinate Zn(2+).

It belongs to the tyrosinase family. It depends on Zn(2+) as a cofactor.

The catalysed reaction is (-)-cyclopenine = viridicatin + methyl isocyanate + H(+). It catalyses the reaction (-)-4'-methoxycyclopenine = 4'-methoxyviridicatin + methyl isocyanate + H(+). Its pathway is secondary metabolite biosynthesis. It participates in alkaloid biosynthesis. The protein operates within mycotoxin biosynthesis. Cyclopenase; part of the gene cluster that mediates the biosynthesis of the aspoquinolone mycotoxins. Within the pathway, the cyclopenase asqI catalyzes the conversion of 4'-methoxycyclopenin into 4'-methoxyviridicatin. Cyclopenin can also be converted into viridicatin by asqI. The first step of the pathway is catalyzed by the nonribosomal peptide synthetase asqK that condenses anthranilic acid and O-methyl-L-tyrosine to produce 4'-methoxycyclopeptin. 4'-methoxycyclopeptin is then converted to 4'-methoxydehydrocyclopeptin by the ketoglutarate-dependent dioxygenase asqJ. AsqJ also converts its first product 4'-methoxydehydrocyclopeptin to 4'-methoxycyclopenin. The following conversion of 4'-methoxycyclopenin into 4'-methoxyviridicatin is catalyzed by the cyclopenase asqI. 4'-methoxyviridicatin is the precursor of quinolone natural products, and is further converted to quinolinone B. The prenyltransferase asqH1 then catalyzes the canonical Friedel-Crafts alkylation of quinolinone B with dimethylallyl cation to yield dimethylallyl quinolone, which is subjected to FAD-dependent dehydrogenation by the FAD-linked oxidoreductase asqF to yield conjugated aryl diene. The delta(3') double bond then serves as the site of the second alkylation with DMAPP catalyzed by the prenyltransferase asqH2 to yield a carbenium ion intermediate, which can be attacked by H(2)O to yield a styrenyl quinolone containing a C3'-hydroxyprenyl chain. The FAD-dependent monooxygenase asqG performs epoxidation of the terminal C7'-C8' olefin. Finally, after dehydratation of the epoxide at C3 by asqC, the quinolone epoxide rearrangement protein asqO catalyzes an enzymatic 3-exo-tet cyclization to yield the cyclopropyl-THF ring system in aspoquinolone. This is Cyclopenase asqI from Emericella nidulans (strain FGSC A4 / ATCC 38163 / CBS 112.46 / NRRL 194 / M139) (Aspergillus nidulans).